Reading from the N-terminus, the 560-residue chain is Leiomodin-3 (560 aa).

The tract at residues 1 to 49 is interaction with tropomyosin alpha; it reads MSEHSRNSDQEELLDEEINEDEILANLSAEELKELQSEMEVMAPDPSLP. Positions 16–42 form a coiled coil; it reads EEINEDEILANLSAEELKELQSEMEVM. 2 disordered regions span residues 45–68 and 127–217; these read DPSL…NFNH and IVAN…SKLD. Over residues 142 to 167 the composition is skewed to acidic residues; that stretch reads ETDEEDEEEEDDDDDDEGEDDGEESE. The span at 168–182 shows a compositional bias: basic and acidic residues; it reads ETNREEEGKAKEQIR. The span at 183 to 192 shows a compositional bias: polar residues; the sequence is NCENNCQQVT. Basic and acidic residues predominate over residues 194–217; that stretch reads KAFKEQRDRPEAQEQSEKKISKLD. The stretch at 386 to 425 forms a coiled coil; sequence VTNLLTRNQDKQRQKRQEEQKQQQLKEQKKLIAMLENGLG. Disordered regions lie at residues 437–480 and 494–530; these read PKPD…KYRT and QRKS…PPLV. Residues 448–458 are compositionally biased toward pro residues; sequence QPPPPRPPNPQ. Residues 498–516 show a composition bias toward basic and acidic residues; it reads RMPEAREPPEKTNLKDVIK. One can recognise a WH2 domain in the interval 534 to 553; sequence PRDQLLNDIRHSSVAYLKPV.

It belongs to the tropomodulin family. In terms of assembly, may interact with tropomyosin alpha (TPM1/2) N-terminus. Interacts with KLHL40; leading to stabilization. Ubiquitinated, leading to its degradation. Interaction with KLHL40 negatively regulates ubiquitination and degradation. In terms of tissue distribution, expressed in cardiac and at higher levels in skeletal muscles (at protein level).

It is found in the cytoplasm. Its subcellular location is the myofibril. The protein resides in the sarcomere. The protein localises to the m line. It localises to the a band. It is found in the cytoskeleton. In terms of biological role, essential for the organization of sarcomeric actin thin filaments in skeletal muscle. Increases the rate of actin polymerization. The sequence is that of Leiomodin-3 (LMOD3) from Homo sapiens (Human).